The primary structure comprises 106 residues: Large ribosomal subunit protein eL42 (106 aa).

The disordered stretch occupies residues 34–53; the sequence is YAQGKRRYDRKQSGYGGQTK.

Belongs to the eukaryotic ribosomal protein eL42 family. In terms of assembly, component of the large ribosomal subunit.

Its subcellular location is the cytoplasm. Functionally, component of the large ribosomal subunit. The ribosome is a large ribonucleoprotein complex responsible for the synthesis of proteins in the cell. This Canis lupus familiaris (Dog) protein is Large ribosomal subunit protein eL42 (Rpl36a).